An 832-amino-acid polypeptide reads, in one-letter code: Cation/H(+) antiporter 21 (832 aa).

Transmembrane regions (helical) follow at residues 33–55 (ISAAAPFFMTQLSVANLTYRILY), 61–81 (LCLPPFVAQILCGLLFSPTVL), 99–119 (LLETFANLALVYNVFLLGLGL), 132–152 (VIIAIVGLLAALLAGAGLYYL), 161–181 (ILAGCMYWSIAFGCTNFPDLA), 200–220 (CAAVVTDLCTWILFIFGMAIF), 236–256 (STIAFVLLCYFVIQPGVAWIF), 278–298 (IICSLITEVCGVHSITGAFLF), 319–339 (FLSGMLMPLFYIICGLRADIG), 352–372 (VVTSASVMVKILSTMFCSIFL), 379–399 (GLAIGALMNTKGTMALVILNA), and 413–433 (HLTLAFLVMSMVVQPLLAIAY). Polar residues predominate over residues 792–802 (RQTAENNNQEP). A disordered region spans residues 792-832 (RQTAENNNQEPVQGKAKTDHEATPFMEDEDDEVEHQYSMRR).

This sequence belongs to the monovalent cation:proton antiporter 2 (CPA2) transporter (TC 2.A.37) family. CHX (TC 2.A.37.4) subfamily. As to expression, specifically expressed in root endodermal cells. Expressed in seedlings, roots, leaves, flowers, flower buds and pollen.

The protein localises to the cell membrane. Functionally, operates as a Na(+)/H(+) antiporter that plays a role in regulation of xylem Na(+) concentration and, consequently, Na(+) accumulation in the leaf. Required for pollen tube guidance, but not for normal pollen development. May also be involved in the development or function of the female gametophyte. In Arabidopsis thaliana (Mouse-ear cress), this protein is Cation/H(+) antiporter 21 (CHX21).